The primary structure comprises 359 residues: Phospho-N-acetylmuramoyl-pentapeptide-transferase (359 aa).

10 helical membrane-spanning segments follow: residues 24–44, 72–92, 100–120, 134–154, 170–190, 197–217, 234–254, 261–281, 289–309, and 336–356; these read FRAL…SPIF, FVPS…SILL, TWIM…DDFV, MLGQ…VMHI, LGYF…NAVN, GLAI…SYVA, AGEL…FLWF, MFMG…LAIM, IIAG…VSVF, and KIVV…IATL.

The protein belongs to the glycosyltransferase 4 family. MraY subfamily. The cofactor is Mg(2+).

The protein localises to the cell inner membrane. It carries out the reaction UDP-N-acetyl-alpha-D-muramoyl-L-alanyl-gamma-D-glutamyl-meso-2,6-diaminopimeloyl-D-alanyl-D-alanine + di-trans,octa-cis-undecaprenyl phosphate = di-trans,octa-cis-undecaprenyl diphospho-N-acetyl-alpha-D-muramoyl-L-alanyl-D-glutamyl-meso-2,6-diaminopimeloyl-D-alanyl-D-alanine + UMP. It functions in the pathway cell wall biogenesis; peptidoglycan biosynthesis. Functionally, catalyzes the initial step of the lipid cycle reactions in the biosynthesis of the cell wall peptidoglycan: transfers peptidoglycan precursor phospho-MurNAc-pentapeptide from UDP-MurNAc-pentapeptide onto the lipid carrier undecaprenyl phosphate, yielding undecaprenyl-pyrophosphoryl-MurNAc-pentapeptide, known as lipid I. The protein is Phospho-N-acetylmuramoyl-pentapeptide-transferase of Hydrogenobaculum sp. (strain Y04AAS1).